Reading from the N-terminus, the 590-residue chain is Monoterepene synthase TPS1, chloropastic (590 aa).

A chloroplast-targeting transit peptide spans M1–A42. (2E)-geranyl diphosphate contacts are provided by R304, D341, D345, R483, and D486. 2 residues coordinate Mg(2+): D341 and D345. The DDXXD motif motif lies at D341–D345. The Mg(2+) site is built by D486, T490, and E494.

The protein belongs to the terpene synthase family. Tpsb subfamily. As to quaternary structure, monomer. Mg(2+) is required as a cofactor.

The protein resides in the plastid. Its subcellular location is the chloroplast. It carries out the reaction (2E)-geranyl diphosphate = beta-thujene + diphosphate. The catalysed reaction is (2E)-geranyl diphosphate = sabinene + diphosphate. The enzyme catalyses (2E)-geranyl diphosphate = beta-pinene + diphosphate. It catalyses the reaction (2E)-geranyl diphosphate = alpha-terpinene + diphosphate. It participates in secondary metabolite biosynthesis; terpenoid biosynthesis. Functionally, monoterpene synthase involved in the biosynthesis of volatile organic compounds. Mediates the conversion of (2E)-geranyl diphosphate (GPP) into beta-thujene, sabinene, beta-pinene and alpha-terpinene. Does not use (2E,6E)-farnesyl diphosphate (FPP) as substrate. This chain is Monoterepene synthase TPS1, chloropastic, found in Cananga odorata (Ylang-ylang tree).